Here is a 346-residue protein sequence, read N- to C-terminus: Phosphoribosylformylglycinamidine cyclo-ligase (346 aa).

The protein belongs to the AIR synthase family.

It is found in the cytoplasm. It catalyses the reaction 2-formamido-N(1)-(5-O-phospho-beta-D-ribosyl)acetamidine + ATP = 5-amino-1-(5-phospho-beta-D-ribosyl)imidazole + ADP + phosphate + H(+). Its pathway is purine metabolism; IMP biosynthesis via de novo pathway; 5-amino-1-(5-phospho-D-ribosyl)imidazole from N(2)-formyl-N(1)-(5-phospho-D-ribosyl)glycinamide: step 2/2. In Geobacillus thermodenitrificans (strain NG80-2), this protein is Phosphoribosylformylglycinamidine cyclo-ligase.